The primary structure comprises 110 residues: Thiosulfate sulfurtransferase GlpE (110 aa).

One can recognise a Rhodanese domain in the interval 19–107 (EDSLAVLVDI…WRRQALPIIQ (89 aa)). The Cysteine persulfide intermediate role is filled by C67.

Belongs to the GlpE family.

It localises to the cytoplasm. It carries out the reaction thiosulfate + hydrogen cyanide = thiocyanate + sulfite + 2 H(+). The enzyme catalyses thiosulfate + [thioredoxin]-dithiol = [thioredoxin]-disulfide + hydrogen sulfide + sulfite + 2 H(+). Transferase that catalyzes the transfer of sulfur from thiosulfate to thiophilic acceptors such as cyanide or dithiols. May function in a CysM-independent thiosulfate assimilation pathway by catalyzing the conversion of thiosulfate to sulfite, which can then be used for L-cysteine biosynthesis. This is Thiosulfate sulfurtransferase GlpE from Photobacterium profundum (strain SS9).